The primary structure comprises 59 residues: UPF0434 protein Sbal_1685 (59 aa).

It belongs to the UPF0434 family.

This chain is UPF0434 protein Sbal_1685, found in Shewanella baltica (strain OS155 / ATCC BAA-1091).